Reading from the N-terminus, the 80-residue chain is Defensin-like protein 44 (80 aa).

An N-terminal signal peptide occupies residues 1–27; it reads MAITKTSVTLLLLIIMAASLSNFSVLA. Disulfide bonds link cysteine 40/cysteine 79, cysteine 44/cysteine 67, cysteine 53/cysteine 77, and cysteine 57/cysteine 78.

The protein belongs to the DEFL family.

The protein resides in the secreted. The protein is Defensin-like protein 44 of Arabidopsis thaliana (Mouse-ear cress).